A 280-amino-acid polypeptide reads, in one-letter code: Homeobox protein SMOX-1 (280 aa).

Positions 61–88 are disordered; sequence PNNNSFQLNTTNDSNNNNTTNNGNDSRS. The segment covering 69 to 85 has biased composition (low complexity); the sequence is NTTNDSNNNNTTNNGND. An Antp-type hexapeptide motif is present at residues 214–219; it reads VYPWMN. The homeobox DNA-binding region spans 229 to 280; that stretch reads QKRTRQTYTRYQTLELEKEFHFNKYLTRRRRIEIAHTLTLTERQIKIWFQNR.

Belongs to the Antp homeobox family.

It is found in the nucleus. The sequence is that of Homeobox protein SMOX-1 (SMOX-1) from Schistosoma mansoni (Blood fluke).